The primary structure comprises 465 residues: Ubiquitin carboxyl-terminal hydrolase UCH54 (465 aa).

A UCH catalytic domain is found at 11–333; that stretch reads EWCLIESNPC…VRFNIIAVMK (323 aa). The active-site Nucleophile is the Cys-145. The Proton donor role is filled by His-220. The segment at 244 to 293 is disordered; it reads INADEQNKPNPNNNNNNKDNDNDNNNNNNNNNNNNNNNNNNNNNNNNNNI. The segment covering 251 to 292 has biased composition (low complexity); it reads KPNPNNNNNNKDNDNDNNNNNNNNNNNNNNNNNNNNNNNNNN. The ULD domain occupies 432-460; the sequence is NFYPFIMSSLNLMAKHKLLKDAYQKEKLK.

It belongs to the peptidase C12 family.

The catalysed reaction is Thiol-dependent hydrolysis of ester, thioester, amide, peptide and isopeptide bonds formed by the C-terminal Gly of ubiquitin (a 76-residue protein attached to proteins as an intracellular targeting signal).. Its function is as follows. Thiol protease that recognizes and hydrolyzes a peptide bond at the C-terminal glycine of either ubiquitin or NEDD8. The sequence is that of Ubiquitin carboxyl-terminal hydrolase UCH54 from Plasmodium falciparum (isolate 3D7).